A 318-amino-acid polypeptide reads, in one-letter code: Biotin synthase (318 aa).

Residues 44-273 form the Radical SAM core domain; it reads LCGNKFDLCT…TVQIRLAGGR (230 aa). Positions 62, 66, and 69 each coordinate [4Fe-4S] cluster. The [2Fe-2S] cluster site is built by Ser-106, Cys-138, Cys-198, and Arg-268.

It belongs to the radical SAM superfamily. Biotin synthase family. As to quaternary structure, homodimer. It depends on [4Fe-4S] cluster as a cofactor. [2Fe-2S] cluster is required as a cofactor.

It carries out the reaction (4R,5S)-dethiobiotin + (sulfur carrier)-SH + 2 reduced [2Fe-2S]-[ferredoxin] + 2 S-adenosyl-L-methionine = (sulfur carrier)-H + biotin + 2 5'-deoxyadenosine + 2 L-methionine + 2 oxidized [2Fe-2S]-[ferredoxin]. The protein operates within cofactor biosynthesis; biotin biosynthesis; biotin from 7,8-diaminononanoate: step 2/2. Its function is as follows. Catalyzes the conversion of dethiobiotin (DTB) to biotin by the insertion of a sulfur atom into dethiobiotin via a radical-based mechanism. The sequence is that of Biotin synthase from Clostridium botulinum (strain Hall / ATCC 3502 / NCTC 13319 / Type A).